The following is a 338-amino-acid chain: MSKRPYCIGEGLKKGAWTTEEDKKLISYIHDHGEGGWRDIPEKAGLKRCGKSCRLRWTNYLKPDIKRGEFSYEEEQIIIMLHASRGNKWSVIARHLPKRTDNEVKNYWNTHLKKRLIDDGIDPVTHKPLASSNPNPVEPMKFDFQKKSNQDEHSSQSSSTTPASLPLSSNLNSVKSKISSGETQIESGHVSCKKRFGRSSSTSRLLNKVAARASSIGNILSTSIEGTLRSPASSSGLPDSFSQSYEYMIDNKEDLGTSIDLNIPEYDFPQFLEQLINDDDENENIVGPEQDLLMSDFPSTFVDEDDILGDITSWSTYLLDHPNFMYESDQDSDEKNFL.

HTH myb-type domains lie at 9–65 (GEGL…KPDI) and 66–116 (KRGE…KKRL). 2 consecutive DNA-binding regions (H-T-H motif) follow at residues 37–61 (WRDI…TNYL) and 89–112 (WSVI…NTHL). Disordered regions lie at residues 123-171 (PVTH…SSNL) and 176-195 (SKIS…CKKR). The span at 140–154 (MKFDFQKKSNQDEHS) shows a compositional bias: basic and acidic residues. Residues 155-171 (SQSSSTTPASLPLSSNL) are compositionally biased toward low complexity.

In terms of assembly, can form complexes with MYC2, MYC3 or MYC4. In terms of tissue distribution, expressed in both vegetative and generative organs. Mostly present in inflorescences, flowers and seedlings, in the transition zone between roots and the foliar part, and stems, and, to a lower extent, in leaves (in midvein and trichomes).

The protein localises to the nucleus. Plays a role in determining the spatial distribution of aliphatic glucosinolates (AGLSs) within the leaf, mostly short chained. Together with MYB28/HAG1 and MYB29/HAG3, promotes aliphatic glucosinolate biosynthesis and represses indolic glucosinolate biosynthesis, but could not activate AGSL biosynthesis on its own. In Arabidopsis thaliana (Mouse-ear cress), this protein is Transcription factor MYB76 (MYB76).